The following is a 321-amino-acid chain: Beta-ketoacyl-[acyl-carrier-protein] synthase III (321 aa).

Active-site residues include C113 and H248. The ACP-binding stretch occupies residues 249-253 (QANAR). The active site involves N278.

It belongs to the thiolase-like superfamily. FabH family. As to quaternary structure, homodimer.

The protein localises to the cytoplasm. It catalyses the reaction malonyl-[ACP] + acetyl-CoA + H(+) = 3-oxobutanoyl-[ACP] + CO2 + CoA. It participates in lipid metabolism; fatty acid biosynthesis. In terms of biological role, catalyzes the condensation reaction of fatty acid synthesis by the addition to an acyl acceptor of two carbons from malonyl-ACP. Catalyzes the first condensation reaction which initiates fatty acid synthesis and may therefore play a role in governing the total rate of fatty acid production. Possesses both acetoacetyl-ACP synthase and acetyl transacylase activities. Its substrate specificity determines the biosynthesis of branched-chain and/or straight-chain of fatty acids. The protein is Beta-ketoacyl-[acyl-carrier-protein] synthase III of Erythrobacter litoralis (strain HTCC2594).